A 670-amino-acid chain; its full sequence is MASKVEQEIRDLREKIRYHEYRYYVLDDPEISDAEFDELIQRLIDLEEKHPGLVTPDSPTQRVGGEPLDKFDKVEHRVPMLSLGNAFNEGDLTNFARRIYRLLDTGKIDFVVEHKIDGLSAILTYQGGRLIRGATRGNGVVGEDVTANIKTIPSVPLRLKKDVDIEVRGEVYIKKDDFSKLNERRLKKGEEPFANPRNAAAGSIRQLDPRLAAARPLSFIAYDVVAYEGEGLQTHVGALELLRELGFKVNWYRKCDDITEVVNICKDWVDKREELPFEIDGMVIKVNELGLREQLGATAKSPRWAIAYKFPAQQKTTVVKDIIISVGRTGALTPTAVLEPVEVDGSTVSRATLHNEDEIRRKDVRIGDHVLVQKAGDVIPEVVKVIKSKRDGSEQIFHMPETCPACGGEVVREEGEAVLRCVNVTGCPAQRREGILHFVSRNAMNIDGVGPALIDQLLEKGLIEDYADLYYLKKEDLIPLERMGEKSATNAIEAIRASKDRPLFRVIFALGIRHVGLGVARVLTEKYRSLSDLMRASGEELVAIDEIGPTIARSIIEFFKEPHNREVINKLKEAGVRLEEKENGKEEQNLYLSGKTFVFTGKLDGFTRSEARDKVIAAGGKVTSSVSRKTDYVVVGDSPGSKYDKARELGVTILDEDKFKEVLKAGDNNG.

NAD(+) is bound by residues 33–37 (DAEFD), 82–83 (SL), and glutamate 113. Residue lysine 115 is the N6-AMP-lysine intermediate of the active site. Positions 136, 170, 285, and 309 each coordinate NAD(+). 4 residues coordinate Zn(2+): cysteine 403, cysteine 406, cysteine 421, and cysteine 427. Residues 587–670 (EQNLYLSGKT…EVLKAGDNNG (84 aa)) enclose the BRCT domain.

The protein belongs to the NAD-dependent DNA ligase family. LigA subfamily. The cofactor is Mg(2+). Mn(2+) serves as cofactor.

The catalysed reaction is NAD(+) + (deoxyribonucleotide)n-3'-hydroxyl + 5'-phospho-(deoxyribonucleotide)m = (deoxyribonucleotide)n+m + AMP + beta-nicotinamide D-nucleotide.. DNA ligase that catalyzes the formation of phosphodiester linkages between 5'-phosphoryl and 3'-hydroxyl groups in double-stranded DNA using NAD as a coenzyme and as the energy source for the reaction. It is essential for DNA replication and repair of damaged DNA. This Halothermothrix orenii (strain H 168 / OCM 544 / DSM 9562) protein is DNA ligase.